The primary structure comprises 682 residues: Potassium-transporting ATPase ATP-binding subunit (682 aa).

The next 4 membrane-spanning stretches (helical) occupy residues 34 to 54, 58 to 78, 219 to 239, and 254 to 274; these read PVMF…LAMV, IAGS…TVLF, IALT…TATL, and VLVA…LSAI. Catalysis depends on Asp307, which acts as the 4-aspartylphosphate intermediate. ATP is bound by residues Asp344, Glu348, 377 to 384, and Lys395; that span reads FTAQSRMS. Residues Asp518 and Asp522 each coordinate Mg(2+). 3 helical membrane-spanning segments follow: residues 588–608, 616–636, and 662–682; these read FAII…LNVM, AILS…PLAL, and LVVP…LGLA.

It belongs to the cation transport ATPase (P-type) (TC 3.A.3) family. Type IA subfamily. The system is composed of three essential subunits: KdpA, KdpB and KdpC.

The protein resides in the cell inner membrane. The enzyme catalyses K(+)(out) + ATP + H2O = K(+)(in) + ADP + phosphate + H(+). Functionally, part of the high-affinity ATP-driven potassium transport (or Kdp) system, which catalyzes the hydrolysis of ATP coupled with the electrogenic transport of potassium into the cytoplasm. This subunit is responsible for energy coupling to the transport system and for the release of the potassium ions to the cytoplasm. In Salmonella agona (strain SL483), this protein is Potassium-transporting ATPase ATP-binding subunit.